We begin with the raw amino-acid sequence, 70 residues long: Palustrin-2ISa (70 aa).

The N-terminal stretch at 1-22 is a signal peptide; sequence MFTLKKSLLLLFFLGTISLSLC. The propeptide at 23 to 39 is removed in mature form; it reads EQERSAEDEGEVIEEEV. A disulfide bridge links Cys-64 with Cys-70.

As to expression, expressed by the skin glands.

It localises to the secreted. Its function is as follows. Has antimicrobial activity against Gram-negative bacterium E.coli ATCC 8739 (MIC=100 ug), against Gram positive bacteria S.aureus ATCC 6538 (MIC=25 ug), methicillin-resistant S.aureus ATCC 43300 (MIC=100 ug), B.subtilis ATCC 6633 (MIC=12.5 ug) and against fungus C.albicans ATCC 90028 (MIC=100 ug). The polypeptide is Palustrin-2ISa (Odorrana ishikawae (Ishikawa's frog)).